Reading from the N-terminus, the 262-residue chain is Hydroxyethylthiazole kinase (262 aa).

Residue Met39 coordinates substrate. ATP is bound by residues Lys115 and Thr160. Residue Gly187 coordinates substrate.

Belongs to the Thz kinase family. Mg(2+) is required as a cofactor.

The enzyme catalyses 5-(2-hydroxyethyl)-4-methylthiazole + ATP = 4-methyl-5-(2-phosphooxyethyl)-thiazole + ADP + H(+). It functions in the pathway cofactor biosynthesis; thiamine diphosphate biosynthesis; 4-methyl-5-(2-phosphoethyl)-thiazole from 5-(2-hydroxyethyl)-4-methylthiazole: step 1/1. Functionally, catalyzes the phosphorylation of the hydroxyl group of 4-methyl-5-beta-hydroxyethylthiazole (THZ). The chain is Hydroxyethylthiazole kinase from Staphylococcus epidermidis (strain ATCC 35984 / DSM 28319 / BCRC 17069 / CCUG 31568 / BM 3577 / RP62A).